A 331-amino-acid chain; its full sequence is Protein PER1 homolog (331 aa).

Positions 1–24 are cleaved as a signal peptide; that stretch reads MRVLRNFTIFFLFTALSLFRQISA. Residues 25-100 are Lumenal-facing; sequence SAGDLHPVYV…QYHGKWYFIR (76 aa). The chain crosses the membrane as a helical span at residues 101–121; the sequence is VFGIQELFSVFFSMLNFMIHY. At 122–139 the chain is on the cytoplasmic side; it reads NGYHIMRRCIPDEHPAKR. A helical transmembrane segment spans residues 140–160; that stretch reads LCLSWAIVGMNAWVWSSVFHI. The Lumenal portion of the chain corresponds to 161–168; it reads RDTPITEK. The helical transmembrane segment at 169-189 threads the bilayer; the sequence is LDYFSAGAFVLFGSYCTLILM. At 190 to 199 the chain is on the cytoplasmic side; it reads LRLDQLPGGK. Residues 200–220 form a helical membrane-spanning segment; the sequence is LLCWIIGVIFIAAFIAHVSYL. The Lumenal portion of the chain corresponds to 221 to 232; it reads SFYSFDYGYNMK. Residues 233 to 250 traverse the membrane as a helical segment; it reads ANVAVGLVQNILWYYYSW. At 251–263 the chain is on the cytoplasmic side; sequence SNRNSGLYWTRWP. Residues 264–284 traverse the membrane as a helical segment; that stretch reads AYIVTSLMLATSLELFDFSPI. Over 285 to 289 the chain is Lumenal; that stretch reads ANLID. A helical transmembrane segment spans residues 290–310; that stretch reads AHALWHLSTVPITHYLYGFVV. Over 311-331 the chain is Cytoplasmic; the sequence is RKCSYDLTKGTFKIKAYDSSR.

The protein belongs to the PGAP3/PER1 family.

The protein localises to the endoplasmic reticulum membrane. It is found in the vacuole membrane. Functionally, involved in the lipid remodeling steps of GPI-anchor maturation. Lipid remodeling steps consist in the generation of 2 saturated fatty chains at the sn-2 position of GPI-anchors proteins. Required for phospholipase A2 activity that removes an acyl-chain at the sn-2 position of GPI-anchors during the remodeling of GPI. Required for efficient transport of GPI-anchor proteins. In Schizosaccharomyces pombe (strain 972 / ATCC 24843) (Fission yeast), this protein is Protein PER1 homolog.